We begin with the raw amino-acid sequence, 287 residues long: AA14 family lytic polysaccharide monooxygenase A (287 aa).

The first 18 residues, 1–18 (MLRILTLSILATSKLASA), serve as a signal peptide directing secretion. N-linked (GlcNAc...) asparagine glycans are attached at residues N33, N83, and N137. 3 disulfides stabilise this stretch: C188–C193, C195–C216, and C236–C243. A glycan (N-linked (GlcNAc...) asparagine) is linked at N238.

It belongs to the polysaccharide monooxygenase AA14 family. Cu(2+) serves as cofactor.

It is found in the secreted. In terms of biological role, lytic polysaccharide monooxygenase (LPMO) that has a broad substrate specificity with strong oxidative activity on pure amorphous cellulose and xyloglucan and plays as a bifunctional enzyme to decompose some specific network structures formed between cellulose and hemicellulose in the plant cell walls. Catalysis by LPMOs requires the reduction of the active-site copper from Cu(II) to Cu(I) by a reducing agent and H(2)O(2) or O(2) as a cosubstrate. Simultaneously oxidizes cellulose, xylan and xyloglucan in natural hemi/cellulosic substrate such as fibrillated eucalyptus pulp, and releases native and oxidized cello-oligosaccharides, xylo-oligosaccharides and xyloglucan oligosaccharides from this substrate. The cellulolytic/hemicellulolytic activity becomes weaker as the contents of xylan increase in the alkaline-extracted hemi/cellulosic substrates. The chain is AA14 family lytic polysaccharide monooxygenase A from Talaromyces rugulosus (Penicillium rugulosum).